The primary structure comprises 209 residues: ATP-dependent dethiobiotin synthetase BioD (209 aa).

13–18 (DIGKTV) is a binding site for ATP. Threonine 17 lines the Mg(2+) pocket. The active site involves lysine 33. Mg(2+) is bound by residues arginine 47 and glutamate 100. Residues 100–103 (EGAG) and 184–186 (PRL) contribute to the ATP site.

Belongs to the dethiobiotin synthetase family. In terms of assembly, homodimer. Requires Mg(2+) as cofactor.

The protein resides in the cytoplasm. It carries out the reaction (7R,8S)-7,8-diammoniononanoate + CO2 + ATP = (4R,5S)-dethiobiotin + ADP + phosphate + 3 H(+). It functions in the pathway cofactor biosynthesis; biotin biosynthesis; biotin from 7,8-diaminononanoate: step 1/2. In terms of biological role, catalyzes a mechanistically unusual reaction, the ATP-dependent insertion of CO2 between the N7 and N8 nitrogen atoms of 7,8-diaminopelargonic acid (DAPA, also called 7,8-diammoniononanoate) to form a ureido ring. This Rhodopseudomonas palustris (strain BisB18) protein is ATP-dependent dethiobiotin synthetase BioD.